The following is a 176-amino-acid chain: dCTP deaminase (176 aa).

DCTP contacts are provided by residues 99–104 (RSTLAR) and Asp-115. Catalysis depends on Glu-125, which acts as the Proton donor/acceptor. DCTP is bound at residue Gln-163.

The protein belongs to the dCTP deaminase family. Homotrimer.

The catalysed reaction is dCTP + H2O + H(+) = dUTP + NH4(+). It participates in pyrimidine metabolism; dUMP biosynthesis; dUMP from dCTP (dUTP route): step 1/2. Functionally, catalyzes the deamination of dCTP to dUTP. The polypeptide is dCTP deaminase (Pyrobaculum aerophilum (strain ATCC 51768 / DSM 7523 / JCM 9630 / CIP 104966 / NBRC 100827 / IM2)).